A 185-amino-acid chain; its full sequence is Ribosome-recycling factor (185 aa).

This sequence belongs to the RRF family.

The protein localises to the cytoplasm. Functionally, responsible for the release of ribosomes from messenger RNA at the termination of protein biosynthesis. May increase the efficiency of translation by recycling ribosomes from one round of translation to another. The sequence is that of Ribosome-recycling factor from Neorickettsia sennetsu (strain ATCC VR-367 / Miyayama) (Ehrlichia sennetsu).